We begin with the raw amino-acid sequence, 935 residues long: Phosphoenolpyruvate carboxylase (935 aa).

Active-site residues include histidine 161 and lysine 593.

This sequence belongs to the PEPCase type 1 family. It depends on Mg(2+) as a cofactor.

The catalysed reaction is oxaloacetate + phosphate = phosphoenolpyruvate + hydrogencarbonate. Functionally, forms oxaloacetate, a four-carbon dicarboxylic acid source for the tricarboxylic acid cycle. The polypeptide is Phosphoenolpyruvate carboxylase (Mycolicibacterium paratuberculosis (strain ATCC BAA-968 / K-10) (Mycobacterium paratuberculosis)).